The sequence spans 506 residues: Histidine ammonia-lyase (506 aa).

A cross-link (5-imidazolinone (Ala-Gly)) is located at residues 143–145 (ASG). Residue S144 is modified to 2,3-didehydroalanine (Ser).

The protein belongs to the PAL/histidase family. Post-translationally, contains an active site 4-methylidene-imidazol-5-one (MIO), which is formed autocatalytically by cyclization and dehydration of residues Ala-Ser-Gly.

The protein localises to the cytoplasm. It carries out the reaction L-histidine = trans-urocanate + NH4(+). It participates in amino-acid degradation; L-histidine degradation into L-glutamate; N-formimidoyl-L-glutamate from L-histidine: step 1/3. The protein is Histidine ammonia-lyase of Salmonella arizonae (strain ATCC BAA-731 / CDC346-86 / RSK2980).